Reading from the N-terminus, the 282-residue chain is Protein MGF 505-3R (282 aa).

It belongs to the asfivirus MGF 505 family.

Its function is as follows. Plays a role in virus cell tropism, and may be required for efficient virus replication in macrophages. In Ornithodoros (relapsing fever ticks), this protein is Protein MGF 505-3R.